Reading from the N-terminus, the 171-residue chain is MNKRNKVKHLNRNKGHRDALINNMITSLFKYERIESTQAKLKVVRSHAEKLITRAKKNLVTDLKPEVQLHNKREVMKRIKDREVVVKLFEDIAKRFETKNGGYTRVLKLVNRISDNSEVGILELTSRKERSTLLKERIEKREIQTKAREEKRATRKSNSAPVNKETTSKKK.

Residues Lys140–Arg152 are compositionally biased toward basic and acidic residues. A disordered region spans residues Lys140–Lys171. Positions Lys156–Glu165 are enriched in polar residues.

It belongs to the bacterial ribosomal protein bL17 family. In terms of assembly, part of the 50S ribosomal subunit. Contacts protein L32.

The chain is Large ribosomal subunit protein bL17 from Leptospira interrogans serogroup Icterohaemorrhagiae serovar Lai (strain 56601).